Here is a 466-residue protein sequence, read N- to C-terminus: 3-isopropylmalate dehydratase large subunit (466 aa).

C347, C407, and C410 together coordinate [4Fe-4S] cluster.

The protein belongs to the aconitase/IPM isomerase family. LeuC type 1 subfamily. As to quaternary structure, heterodimer of LeuC and LeuD. The cofactor is [4Fe-4S] cluster.

The catalysed reaction is (2R,3S)-3-isopropylmalate = (2S)-2-isopropylmalate. It functions in the pathway amino-acid biosynthesis; L-leucine biosynthesis; L-leucine from 3-methyl-2-oxobutanoate: step 2/4. In terms of biological role, catalyzes the isomerization between 2-isopropylmalate and 3-isopropylmalate, via the formation of 2-isopropylmaleate. The sequence is that of 3-isopropylmalate dehydratase large subunit from Vibrio vulnificus (strain CMCP6).